Reading from the N-terminus, the 163-residue chain is Methyl-CpG-binding domain-containing protein 3 (163 aa).

Residues 6-56 (TTLIDSYAAQCWKCLKVRSIESQEDYEEIRSKTLEKFFECKRCEEPGDMVM) form a CW-type zinc finger. One can recognise an MBD domain in the interval 65–137 (WFQDEHSIPK…EEVSFAAPKR (73 aa)). Positions 140–163 (LKKKPVDSHSSSRNTEEDGVSRDA) are disordered. A compositionally biased stretch (basic and acidic residues) spans 153 to 163 (NTEEDGVSRDA).

The protein resides in the nucleus. In terms of biological role, probable transcriptional regulator. This is Methyl-CpG-binding domain-containing protein 3 (MBD3) from Arabidopsis thaliana (Mouse-ear cress).